The chain runs to 282 residues: ATP synthase subunit a (282 aa).

5 helical membrane passes run 45–65 (AIHV…LWLF), 106–126 (IAPL…MDLI), 160–179 (INAT…FYSI), 232–252 (LIFI…SVPW), and 253–273 (AIFH…LTIV).

It belongs to the ATPase A chain family. In terms of assembly, F-type ATPases have 2 components, CF(1) - the catalytic core - and CF(0) - the membrane proton channel. CF(1) has five subunits: alpha(3), beta(3), gamma(1), delta(1), epsilon(1). CF(0) has three main subunits: a(1), b(2) and c(9-12). The alpha and beta chains form an alternating ring which encloses part of the gamma chain. CF(1) is attached to CF(0) by a central stalk formed by the gamma and epsilon chains, while a peripheral stalk is formed by the delta and b chains.

It localises to the cell inner membrane. Functionally, key component of the proton channel; it plays a direct role in the translocation of protons across the membrane. The chain is ATP synthase subunit a from Marinomonas sp. (strain MWYL1).